The sequence spans 417 residues: Inactive cytochrome P450 76AD1 (417 aa).

Residues 4-24 form a helical membrane-spanning segment; sequence ATLAMILAIWFISFHFIKLLF.

Belongs to the cytochrome P450 family.

The protein resides in the membrane. The protein operates within pigment biosynthesis; betalain biosynthesis. Its function is as follows. Inactive cytochrome unable to convert L-DOPA to cyclo-DOPA in the betalain pathway and producing a yellow mutant phenotype. A frameshift replaces 108 amino acids of the active protein found in red beets (AC I3PFJ5) with 27 new residues followed by a stop codon. The sequence is that of Inactive cytochrome P450 76AD1 from Beta vulgaris (Sugar beet).